Consider the following 241-residue polypeptide: 1-(5-phosphoribosyl)-5-[(5-phosphoribosylamino)methylideneamino] imidazole-4-carboxamide isomerase (241 aa).

The active-site Proton acceptor is the D8. The Proton donor role is filled by D130.

Belongs to the HisA/HisF family.

Its subcellular location is the cytoplasm. It carries out the reaction 1-(5-phospho-beta-D-ribosyl)-5-[(5-phospho-beta-D-ribosylamino)methylideneamino]imidazole-4-carboxamide = 5-[(5-phospho-1-deoxy-D-ribulos-1-ylimino)methylamino]-1-(5-phospho-beta-D-ribosyl)imidazole-4-carboxamide. It functions in the pathway amino-acid biosynthesis; L-histidine biosynthesis; L-histidine from 5-phospho-alpha-D-ribose 1-diphosphate: step 4/9. This chain is 1-(5-phosphoribosyl)-5-[(5-phosphoribosylamino)methylideneamino] imidazole-4-carboxamide isomerase, found in Flavobacterium psychrophilum (strain ATCC 49511 / DSM 21280 / CIP 103535 / JIP02/86).